Consider the following 122-residue polypeptide: Large ribosomal subunit protein bL12 (122 aa).

This sequence belongs to the bacterial ribosomal protein bL12 family. In terms of assembly, homodimer. Part of the ribosomal stalk of the 50S ribosomal subunit. Forms a multimeric L10(L12)X complex, where L10 forms an elongated spine to which 2 to 4 L12 dimers bind in a sequential fashion. Binds GTP-bound translation factors.

Forms part of the ribosomal stalk which helps the ribosome interact with GTP-bound translation factors. Is thus essential for accurate translation. This is Large ribosomal subunit protein bL12 from Blochmanniella pennsylvanica (strain BPEN).